The following is a 105-amino-acid chain: UPF0145 protein AHA_2580 (105 aa).

It belongs to the UPF0145 family.

This Aeromonas hydrophila subsp. hydrophila (strain ATCC 7966 / DSM 30187 / BCRC 13018 / CCUG 14551 / JCM 1027 / KCTC 2358 / NCIMB 9240 / NCTC 8049) protein is UPF0145 protein AHA_2580.